The primary structure comprises 125 residues: Holo-[acyl-carrier-protein] synthase (125 aa).

Aspartate 8 and glutamate 55 together coordinate Mg(2+).

The protein belongs to the P-Pant transferase superfamily. AcpS family. Requires Mg(2+) as cofactor.

Its subcellular location is the cytoplasm. It catalyses the reaction apo-[ACP] + CoA = holo-[ACP] + adenosine 3',5'-bisphosphate + H(+). Functionally, transfers the 4'-phosphopantetheine moiety from coenzyme A to a Ser of acyl-carrier-protein. The chain is Holo-[acyl-carrier-protein] synthase from Treponema pallidum (strain Nichols).